We begin with the raw amino-acid sequence, 467 residues long: UDP-N-acetylmuramate--L-alanine ligase (467 aa).

114–120 (GTHGKTT) provides a ligand contact to ATP.

The protein belongs to the MurCDEF family.

It localises to the cytoplasm. The catalysed reaction is UDP-N-acetyl-alpha-D-muramate + L-alanine + ATP = UDP-N-acetyl-alpha-D-muramoyl-L-alanine + ADP + phosphate + H(+). It functions in the pathway cell wall biogenesis; peptidoglycan biosynthesis. Functionally, cell wall formation. This Bradyrhizobium sp. (strain BTAi1 / ATCC BAA-1182) protein is UDP-N-acetylmuramate--L-alanine ligase.